Consider the following 154-residue polypeptide: Putative peroxiredoxin MT1643 (154 aa).

The 153-residue stretch at M1–S153 folds into the Thioredoxin domain. C44 (cysteine sulfenic acid (-SOH) intermediate) is an active-site residue. Residues C44 and C49 are joined by a disulfide bond.

This sequence belongs to the peroxiredoxin family. BCP/PrxQ subfamily. Monomer.

The catalysed reaction is a hydroperoxide + [thioredoxin]-dithiol = an alcohol + [thioredoxin]-disulfide + H2O. Its function is as follows. Thiol-specific peroxidase that catalyzes the reduction of hydrogen peroxide and organic hydroperoxides to water and alcohols, respectively. Plays a role in cell protection against oxidative stress by detoxifying peroxides and as sensor of hydrogen peroxide-mediated signaling events. This is Putative peroxiredoxin MT1643 (bcpB) from Mycobacterium tuberculosis (strain CDC 1551 / Oshkosh).